The following is a 141-amino-acid chain: MAMTMRLDVVSVEGSLFSGIVESVVAPAEMGAVGIYPGHAPLLTRLKPGAVRLRIPYQAEEEIVYVSGGMLEVQPYKVTLLADVAMREKALAEADLHAEKHRAEAVLKDRVTADAYARLEVELAKALTYVQGVQKLRRRGF.

This sequence belongs to the ATPase epsilon chain family. F-type ATPases have 2 components, CF(1) - the catalytic core - and CF(0) - the membrane proton channel. CF(1) has five subunits: alpha(3), beta(3), gamma(1), delta(1), epsilon(1). CF(0) has three main subunits: a, b and c.

It is found in the cell inner membrane. Produces ATP from ADP in the presence of a proton gradient across the membrane. The polypeptide is ATP synthase epsilon chain 1 (Thiobacillus denitrificans (strain ATCC 25259 / T1)).